Consider the following 1161-residue polypeptide: Integrin alpha-D (1161 aa).

The first 17 residues, 1 to 17, serve as a signal peptide directing secretion; that stretch reads MTFGTVLLLSVLASYHG. Over 18 to 1099 the chain is Extracellular; it reads FNLDVEEPTI…MVLEEDEVYN (1082 aa). FG-GAP repeat units follow at residues 19–76 and 77–136; these read NLDV…MCQP and IPLH…IIQT. Asn-59 carries an N-linked (GlcNAc...) asparagine glycan. A disulfide bridge links Cys-67 with Cys-74. 2 N-linked (GlcNAc...) asparagine glycosylation sites follow: Asn-87 and Asn-99. An intrachain disulfide couples Cys-106 to Cys-124. The region spanning 150–332 is the VWFA domain; sequence DIVFLIDGSG…SIQKQLQEKI (183 aa). 5 FG-GAP repeats span residues 339–390, 391–442, 443–503, 506–564, and 569–629; these read QSRA…PTFI, NMSQ…SRQW, RKKA…RVQW, DAVL…SGIS, and QRIA…FSPV. Asn-391 carries N-linked (GlcNAc...) asparagine glycosylation. Residues Asp-465, Asp-467, Asp-469, Asp-473, Asp-529, Asn-531, Asp-533, Asp-537, Asp-592, Asp-596, and Asp-600 each coordinate Ca(2+). Cys-654 and Cys-709 are disulfide-bonded. N-linked (GlcNAc...) asparagine glycosylation is found at Asn-690 and Asn-732. 2 cysteine pairs are disulfide-bonded: Cys-768–Cys-774 and Cys-845–Cys-860. N-linked (GlcNAc...) asparagine glycosylation is found at Asn-872 and Asn-956. 2 disulfides stabilise this stretch: Cys-993–Cys-1017 and Cys-1022–Cys-1027. Asn-1045 carries an N-linked (GlcNAc...) asparagine glycan. A helical membrane pass occupies residues 1100–1120; sequence AIPIIMGSSVGALLLLALITA. Residues 1121-1161 are Cytoplasmic-facing; that stretch reads TLYKLGFFKRHYKEMLEDKPEDTATFSGDDFSCVAPNVPLS. The GFFKR motif motif lies at 1126–1130; sequence GFFKR.

This sequence belongs to the integrin alpha chain family. In terms of assembly, heterodimer of an alpha and a beta subunit. Alpha-D associates with beta-2. As to expression, expressed moderately on myelomonocytic cell lines and subsets of peripheral blood leukocytes and strongly on tissue-specialized cells, including macrophages foam cells within atherosclerotic plaques, and on splenic red pulp macrophages.

The protein localises to the membrane. In terms of biological role, integrin alpha-D/beta-2 is a receptor for ICAM3 and VCAM1. May play a role in the atherosclerotic process such as clearing lipoproteins from plaques and in phagocytosis of blood-borne pathogens, particulate matter, and senescent erythrocytes from the blood. This Homo sapiens (Human) protein is Integrin alpha-D (ITGAD).